Reading from the N-terminus, the 249-residue chain is Sugar fermentation stimulation protein homolog (249 aa).

This sequence belongs to the SfsA family.

The chain is Sugar fermentation stimulation protein homolog from Rhizobium rhizogenes (strain K84 / ATCC BAA-868) (Agrobacterium radiobacter).